Here is a 417-residue protein sequence, read N- to C-terminus: Cobalamin binding intrinsic factor (417 aa).

A signal peptide spans 1–18 (MAWLTLYLLSVLWAVAGT). Cystine bridges form between cysteine 26–cysteine 246, cysteine 103–cysteine 288, and cysteine 143–cysteine 182. Aspartate 171 is a binding site for cob(II)alamin. Phosphoserine is present on serine 191. Residues aspartate 222 and glutamine 270 each contribute to the cob(II)alamin site. 2 N-linked (GlcNAc...) asparagine glycosylation sites follow: asparagine 311 and asparagine 330. Cob(II)alamin contacts are provided by residues 365–370 (SWGLIV) and 386–395 (WEFLSGKTPL). N-linked (GlcNAc...) asparagine glycosylation is present at asparagine 413.

The protein belongs to the eukaryotic cobalamin transport proteins family. As to quaternary structure, interacts with CUBN (via CUB domains). In terms of tissue distribution, gastric mucosa.

The protein resides in the secreted. Functionally, promotes absorption of the essential vitamin cobalamin (Cbl) in the ileum. After interaction with CUBN, the CBLIF-cobalamin complex is internalized via receptor-mediated endocytosis. In Mus musculus (Mouse), this protein is Cobalamin binding intrinsic factor (Cblif).